Consider the following 368-residue polypeptide: N-acetylneuraminate epimerase (368 aa).

The first 19 residues, 1-19, serve as a signal peptide directing secretion; it reads MNKTIMALAIMMASFAANA. Kelch repeat units follow at residues 40 to 84, 86 to 137, 139 to 173, 174 to 219, 222 to 265, 287 to 336, and 338 to 367; these read TVYI…AFID, NLYV…FVHN, KAYVTGGVNQNIFNGYFEDLNEAGKDSTAIDKINA, HYFD…VNKG, TWLI…VAGG, ENYQ…PWNN, and LLIIGGETAGGKAVTDSVLISVKDNKVTVQ. The Proton acceptor role is filled by E228.

Belongs to the NanM family. As to quaternary structure, homodimer.

It is found in the periplasm. The catalysed reaction is N-acetyl-alpha-neuraminate = N-acetyl-beta-neuraminate. In terms of biological role, converts alpha-N-acetylneuranimic acid (Neu5Ac) to the beta-anomer, accelerating the equilibrium between the alpha- and beta-anomers. Probably facilitates sialidase-negative bacteria to compete successfully for limited amounts of extracellular Neu5Ac, which is likely taken up in the beta-anomer. In addition, the rapid removal of sialic acid from solution might be advantageous to the bacterium to damp down host responses. This chain is N-acetylneuraminate epimerase, found in Shigella flexneri serotype 5b (strain 8401).